We begin with the raw amino-acid sequence, 855 residues long: Axonemal dynein light chain domain-containing protein 1 (855 aa).

Residues 1–17 (MSLPKTPSTPLNSASTS) show a composition bias toward polar residues. The interval 1–31 (MSLPKTPSTPLNSASTSESKKLVSVATEGTR) is disordered. Coiled coils occupy residues 316-402 (QRIL…WSSA), 451-480 (LQKL…RETL), and 571-596 (SERQ…RING).

It localises to the cytoplasm. May be essential for spermiogenesis and male fertility probably by regulating the manchette dynamics, spermatid head shaping and sperm flagellum assembly. The polypeptide is Axonemal dynein light chain domain-containing protein 1 (AXDND1) (Macaca fascicularis (Crab-eating macaque)).